The chain runs to 469 residues: Glutamate--tRNA ligase (469 aa).

The 'HIGH' region motif lies at 11–21 (PSPTGFIHLGN). The span at 118-131 (GEKPRYDGTWRPEP) shows a compositional bias: basic and acidic residues. The segment at 118–138 (GEKPRYDGTWRPEPGKVLPEP) is disordered. A 'KMSKS' region motif is present at residues 243–247 (KMSKR). K246 contributes to the ATP binding site.

It belongs to the class-I aminoacyl-tRNA synthetase family. Glutamate--tRNA ligase type 1 subfamily. As to quaternary structure, monomer.

It is found in the cytoplasm. The catalysed reaction is tRNA(Glu) + L-glutamate + ATP = L-glutamyl-tRNA(Glu) + AMP + diphosphate. Functionally, catalyzes the attachment of glutamate to tRNA(Glu) in a two-step reaction: glutamate is first activated by ATP to form Glu-AMP and then transferred to the acceptor end of tRNA(Glu). The sequence is that of Glutamate--tRNA ligase from Burkholderia vietnamiensis (strain G4 / LMG 22486) (Burkholderia cepacia (strain R1808)).